A 668-amino-acid polypeptide reads, in one-letter code: Putative ankyrin repeat protein FPV244 (668 aa).

ANK repeat units lie at residues 40-69 (IPFT…KLIY), 144-173 (EYMK…DVNA), 177-206 (YCRT…DVNI), 210-239 (DDLS…NINK), 272-302 (YKNT…DVNA), 306-336 (KGET…DVNA), 340-370 (LYIT…NVNA), 374-403 (CDKT…DIEA), 407-437 (KIGT…NVNS), 441-471 (YLST…DVNA), 473-502 (NIRN…ELRD), and 571-602 (NMFY…EINT).

The sequence is that of Putative ankyrin repeat protein FPV244 from Vertebrata (FPV).